The following is a 478-amino-acid chain: Calcium/calmodulin-dependent protein kinase type II subunit alpha (478 aa).

Tyrosine 13 is subject to Phosphotyrosine. The region spanning 13-271 (YQLFEELGKG…AAEALKHPWI (259 aa)) is the Protein kinase domain. ATP is bound by residues 19 to 27 (LGKGAFSVV) and lysine 42. Aspartate 135 serves as the catalytic Proton acceptor. The residue at position 257 (serine 257) is a Phosphoserine. Residue threonine 286 is modified to Phosphothreonine; by autocatalysis. A calmodulin-binding region spans residues 290 to 300 (LKKFNARRKLK). Positions 310–320 (TRNFSGGKSGG) are interaction with BAALC. The disordered stretch occupies residues 314-341 (SGGKSGGNKKNDGVKESSESTNTTIEDE). A compositionally biased stretch (basic and acidic residues) spans 322–331 (KKNDGVKESS). 3 positions are modified to phosphoserine: serine 330, serine 331, and serine 333. Residues threonine 336 and threonine 337 each carry the phosphothreonine modification. The residue at position 404 (serine 404) is a Phosphoserine.

It belongs to the protein kinase superfamily. CAMK Ser/Thr protein kinase family. CaMK subfamily. There are 4 genes encoding calcium/calmodulin-dependent protein kinase type II chains: CAMK2A, CAMK2B, CAMK2G and CAMK2D. The corresponding proteins assemble into homo- or heteromultimeric holoenzymes composed of 12 subunits with two hexameric rings stacked one on top of the other. Interacts with BAALC. Interacts with MPDZ. Interacts with SYN1. Interacts with CAMK2N2. Interacts with SYNGAP1. Interacts with SYNPO2. Interacts with SHANK3. Interacts with GRIN2B. Interacts with CACNB2. Interacts with LRRC7. Interacts with GRM5. Interacts with DAGLA (via C-terminal); this interaction is enhanced by autophosphorylation of CAMK2A at Thr-286. Interacts with CAMK2N1; this interaction requires CAMK2A activation by Ca(2+). Mg(2+) serves as cofactor. In terms of processing, autophosphorylation of Thr-286 following activation by Ca(2+)/calmodulin. Phosphorylation of Thr-286 locks the kinase into an activated state. Palmitoylated. Probably palmitoylated by ZDHHC3 and ZDHHC7. In terms of tissue distribution, expressed in brain. Expressed in skeletal muscle.

It localises to the cytoplasm. It is found in the synapse. The protein localises to the postsynaptic density. The protein resides in the cell projection. Its subcellular location is the dendritic spine. It localises to the dendrite. The catalysed reaction is L-seryl-[protein] + ATP = O-phospho-L-seryl-[protein] + ADP + H(+). It catalyses the reaction L-threonyl-[protein] + ATP = O-phospho-L-threonyl-[protein] + ADP + H(+). Activated by Ca(2+)/calmodulin. Binding of calmodulin results in conformational change that relieves intrasteric autoinhibition and allows autophosphorylation of Thr-286 which turns the kinase in a constitutively active form and confers to the kinase a Ca(2+)-independent activity. Calcium/calmodulin-dependent protein kinase that functions autonomously after Ca(2+)/calmodulin-binding and autophosphorylation, and is involved in various processes, such as synaptic plasticity, neurotransmitter release and long-term potentiation. Member of the NMDAR signaling complex in excitatory synapses, it regulates NMDAR-dependent potentiation of the AMPAR and therefore excitatory synaptic transmission. Regulates dendritic spine development. Also regulates the migration of developing neurons. Phosphorylates the transcription factor FOXO3 to activate its transcriptional activity. Phosphorylates the transcription factor ETS1 in response to calcium signaling, thereby decreasing ETS1 affinity for DNA. In response to interferon-gamma (IFN-gamma) stimulation, catalyzes phosphorylation of STAT1, stimulating the JAK-STAT signaling pathway. In response to interferon-beta (IFN-beta) stimulation, stimulates the JAK-STAT signaling pathway. Acts as a negative regulator of 2-arachidonoylglycerol (2-AG)-mediated synaptic signaling via modulation of DAGLA activity. In terms of biological role, has no kinase activity. This Mus musculus (Mouse) protein is Calcium/calmodulin-dependent protein kinase type II subunit alpha (Camk2a).